The sequence spans 175 residues: NADH-ubiquinone oxidoreductase chain 6 (175 aa).

5 helical membrane-spanning segments follow: residues 1–21 (MMTY…VGFS), 25–45 (SPIY…GIVL), 47–67 (FGGS…MMVV), 88–108 (VVLG…YYVL), and 149–169 (YGTW…VVIM).

It belongs to the complex I subunit 6 family. As to quaternary structure, core subunit of respiratory chain NADH dehydrogenase (Complex I) which is composed of 45 different subunits.

It localises to the mitochondrion inner membrane. The enzyme catalyses a ubiquinone + NADH + 5 H(+)(in) = a ubiquinol + NAD(+) + 4 H(+)(out). Functionally, core subunit of the mitochondrial membrane respiratory chain NADH dehydrogenase (Complex I) which catalyzes electron transfer from NADH through the respiratory chain, using ubiquinone as an electron acceptor. Essential for the catalytic activity and assembly of complex I. The chain is NADH-ubiquinone oxidoreductase chain 6 (MT-ND6) from Ovis aries (Sheep).